The sequence spans 552 residues: Cholesterol oxidase (552 aa).

The segment at residues 1 to 45 is a signal peptide (tat-type signal); it reads MTDSRANRADATRGVASVSRRRFLAGAGLTAGAIALSSMSTSASA. Y66, G67, E86, G160, N164, G165, M167, and V295 together coordinate FAD. Residues E406 and H492 each act as proton acceptor in the active site. Residues G520 and F532 each contribute to the FAD site.

The protein belongs to the GMC oxidoreductase family. Requires FAD as cofactor. Predicted to be exported by the Tat system. The position of the signal peptide cleavage has been experimentally proven.

The protein localises to the secreted. The enzyme catalyses cholesterol + O2 = cholest-5-en-3-one + H2O2. It catalyses the reaction cholest-5-en-3-one = cholest-4-en-3-one. It participates in steroid metabolism; cholesterol degradation. Its function is as follows. Bifunctional enzyme that catalyzes the oxidation and isomerization of cholesterol to cholestenone (cholest-4-en-3-one), an initial step in the cholesterol degradation process. The sequence is that of Cholesterol oxidase from Brevibacterium sterolicum.